The following is a 133-amino-acid chain: MALKIRLARAGSKKRPYYHVVVADARSPRDGRFIESLGSWNPLLPKDGERVKVDADRVKHWLSHGAQPTDRVLRFLDEAGLAKRDARSNPKKAEPGKKAQERAALLKKAQEDAAAAVAAAAAAPAEAEAATAE.

The span at 83–101 shows a compositional bias: basic and acidic residues; it reads KRDARSNPKKAEPGKKAQE. The interval 83–102 is disordered; it reads KRDARSNPKKAEPGKKAQER.

Belongs to the bacterial ribosomal protein bS16 family.

In Mesorhizobium japonicum (strain LMG 29417 / CECT 9101 / MAFF 303099) (Mesorhizobium loti (strain MAFF 303099)), this protein is Small ribosomal subunit protein bS16.